The primary structure comprises 224 residues: uncharacterized protein (224 aa).

The chain crosses the membrane as a helical span at residues 21–41 (LTVILIIPIVYLGVCGCFEIV).

It localises to the membrane. This is an uncharacterized protein from Methanocaldococcus jannaschii (strain ATCC 43067 / DSM 2661 / JAL-1 / JCM 10045 / NBRC 100440) (Methanococcus jannaschii).